We begin with the raw amino-acid sequence, 321 residues long: Probable protein phosphatase methylesterase 1 (321 aa).

Active-site residues include S170, D195, and H307.

The protein belongs to the AB hydrolase superfamily.

The catalysed reaction is [phosphatase 2A protein]-C-terminal L-leucine methyl ester + H2O = [phosphatase 2A protein]-C-terminal L-leucine + methanol + H(+). Functionally, demethylates proteins that have been reversibly carboxymethylated. In Dictyostelium discoideum (Social amoeba), this protein is Probable protein phosphatase methylesterase 1 (ppme1).